The sequence spans 1161 residues: Integrin alpha-D (1161 aa).

The signal sequence occupies residues 1–17 (MTFGTVLLLSVLASYHG). Over 18 to 1099 (FNLDVEEPTI…MVLEEDEVYN (1082 aa)) the chain is Extracellular. 2 FG-GAP repeats span residues 19-76 (NLDV…MCQP) and 77-136 (IPLH…IIQT). A glycan (N-linked (GlcNAc...) asparagine) is linked at Asn-59. Cys-67 and Cys-74 are oxidised to a cystine. 2 N-linked (GlcNAc...) asparagine glycosylation sites follow: Asn-87 and Asn-99. Residues Cys-106 and Cys-124 are joined by a disulfide bond. The region spanning 150–332 (DIVFLIDGSG…SIQKQLQEKI (183 aa)) is the VWFA domain. FG-GAP repeat units follow at residues 339–390 (QSRA…PTFI), 391–442 (NMSQ…SRQW), 443–503 (RKKA…RVQW), 506–564 (DAVL…SGIS), and 569–629 (QRIA…FSPV). Asn-391 carries N-linked (GlcNAc...) asparagine glycosylation. Residues Asp-465, Asp-467, Asp-469, Asp-473, Asp-529, Asn-531, Asp-533, Asp-537, Asp-592, Asp-596, and Asp-600 each contribute to the Ca(2+) site. Cys-654 and Cys-709 are joined by a disulfide. 2 N-linked (GlcNAc...) asparagine glycosylation sites follow: Asn-690 and Asn-732. Cystine bridges form between Cys-768–Cys-774 and Cys-845–Cys-860. N-linked (GlcNAc...) asparagine glycosylation is found at Asn-872 and Asn-956. 2 cysteine pairs are disulfide-bonded: Cys-993–Cys-1017 and Cys-1022–Cys-1027. Asn-1045 carries N-linked (GlcNAc...) asparagine glycosylation. Residues 1100 to 1120 (AIPIIMGSSVGALLLLALITA) form a helical membrane-spanning segment. Over 1121–1161 (TLYKLGFFKRHYKEMLEDKPEDTATFSGDDFSCVAPNVPLS) the chain is Cytoplasmic. A GFFKR motif motif is present at residues 1126 to 1130 (GFFKR).

Belongs to the integrin alpha chain family. In terms of assembly, heterodimer of an alpha and a beta subunit. Alpha-D associates with beta-2. As to expression, expressed moderately on myelomonocytic cell lines and subsets of peripheral blood leukocytes and strongly on tissue-specialized cells, including macrophages foam cells within atherosclerotic plaques, and on splenic red pulp macrophages.

It is found in the membrane. Its function is as follows. Integrin alpha-D/beta-2 is a receptor for ICAM3 and VCAM1. May play a role in the atherosclerotic process such as clearing lipoproteins from plaques and in phagocytosis of blood-borne pathogens, particulate matter, and senescent erythrocytes from the blood. This chain is Integrin alpha-D (ITGAD), found in Homo sapiens (Human).